We begin with the raw amino-acid sequence, 421 residues long: Zinc chaperone AztD (421 aa).

An N-terminal signal peptide occupies residues 1-29 (MMENIMKKRLLSTSISTLLLGLSVMPAFA). Residues His101, His104, Asp106, His126, His169, His216, and His405 each contribute to the Zn(2+) site. Cys212 and Cys229 are oxidised to a cystine. A disordered region spans residues 399 to 421 (GGSGKVHGEHHDHEAHHHDDHAH). Over residues 404 to 421 (VHGEHHDHEAHHHDDHAH) the composition is skewed to basic and acidic residues. The short motif at 408 to 419 (HHDHEAHHHDDH) is the N-terminal Zn(2+)-binding motif; binds a third Zn(2+) with low affinity element.

As to quaternary structure, monomer.

It localises to the periplasm. Acts as a zinc chaperone in the AztABCD zinc transport system. Directly transfers one zinc cation to the solute binding protein AztC; the transfer occurs without the formation of a stable interaction. Binds 3 Zn(2+), two with high affinity and one with low affinity, and transfers only Zn(2+) bound to site 2 to AztC. This is Zinc chaperone AztD from Citrobacter koseri (strain ATCC BAA-895 / CDC 4225-83 / SGSC4696).